Consider the following 432-residue polypeptide: Testis-specific Y-encoded-like protein 1 (432 aa).

Disordered stretches follow at residues 1 to 31 (MSGRDGGERTPLLEAHSLTTSDCAAGAPDPS), 54 to 110 (ALPP…LETA), and 116 to 135 (TDDSLGNGCQPGEPQGLSRE). Lys160 participates in a covalent cross-link: Glycyl lysine isopeptide (Lys-Gly) (interchain with G-Cter in SUMO2).

It belongs to the nucleosome assembly protein (NAP) family. In terms of processing, ubiquitinated by the CRL2(APPBP2) complex, which recognizes the Arg-Xaa-Xaa-Gly sequence at the C-terminus, leading to its degradation.

It localises to the nucleus. Its subcellular location is the nucleolus. The protein is Testis-specific Y-encoded-like protein 1 (TSPYL1) of Bos taurus (Bovine).